We begin with the raw amino-acid sequence, 321 residues long: Urease accessory protein UreD (321 aa).

It belongs to the UreD family. As to quaternary structure, ureD, UreF and UreG form a complex that acts as a GTP-hydrolysis-dependent molecular chaperone, activating the urease apoprotein by helping to assemble the nickel containing metallocenter of UreC. The UreE protein probably delivers the nickel.

The protein resides in the cytoplasm. Its function is as follows. Required for maturation of urease via the functional incorporation of the urease nickel metallocenter. The sequence is that of Urease accessory protein UreD from Yersinia pseudotuberculosis serotype O:1b (strain IP 31758).